The following is a 276-amino-acid chain: Large ribosomal subunit protein uL2 (276 aa).

Positions Asn212–Lys276 are disordered. Residues Tyr257 to Lys276 are compositionally biased toward basic residues.

This sequence belongs to the universal ribosomal protein uL2 family. As to quaternary structure, part of the 50S ribosomal subunit. Forms a bridge to the 30S subunit in the 70S ribosome.

Functionally, one of the primary rRNA binding proteins. Required for association of the 30S and 50S subunits to form the 70S ribosome, for tRNA binding and peptide bond formation. It has been suggested to have peptidyltransferase activity; this is somewhat controversial. Makes several contacts with the 16S rRNA in the 70S ribosome. This is Large ribosomal subunit protein uL2 from Helicobacter acinonychis (strain Sheeba).